Consider the following 427-residue polypeptide: Trigger factor (427 aa).

Residues Gly-163–Pro-248 enclose the PPIase FKBP-type domain.

This sequence belongs to the FKBP-type PPIase family. Tig subfamily.

It localises to the cytoplasm. It catalyses the reaction [protein]-peptidylproline (omega=180) = [protein]-peptidylproline (omega=0). In terms of biological role, involved in protein export. Acts as a chaperone by maintaining the newly synthesized protein in an open conformation. Functions as a peptidyl-prolyl cis-trans isomerase. This is Trigger factor from Clostridium botulinum (strain Alaska E43 / Type E3).